The chain runs to 357 residues: Eukaryotic translation initiation factor 3 subunit F (357 aa).

Positions 1–82 (MATPAVPVSA…PAPALPGPAL (82 aa)) are disordered. At Ala2 the chain carries N-acetylalanine. Positions 9-36 (SAPPATPTPVPAAAPASVPAPTPAPAAA) are enriched in pro residues. Over residues 37–74 (PVPAAAPASSSDPAAAAAATAAPGQTPASAQAPAQTPA) the composition is skewed to low complexity. Phosphoserine; by CDK11; in vitro is present on Ser46. One can recognise an MPN domain in the interval 92–222 (VRLHPVILAS…IKAYVSTLMG (131 aa)). Lys238 bears the N6-acetyllysine mark. Ser258 carries the phosphoserine modification.

This sequence belongs to the eIF-3 subunit F family. In terms of assembly, component of the eukaryotic translation initiation factor 3 (eIF-3) complex, which is composed of 13 subunits: EIF3A, EIF3B, EIF3C, EIF3D, EIF3E, EIF3F, EIF3G, EIF3H, EIF3I, EIF3J, EIF3K, EIF3L and EIF3M. The eIF-3 complex appears to include 3 stable modules: module A is composed of EIF3A, EIF3B, EIF3G and EIF3I; module B is composed of EIF3F, EIF3H, and EIF3M; and module C is composed of EIF3C, EIF3D, EIF3E, EIF3K and EIF3L. EIF3C of module C binds EIF3B of module A and EIF3H of module B, thereby linking the three modules. EIF3J is a labile subunit that binds to the eIF-3 complex via EIF3B. The eIF-3 complex interacts with RPS6KB1 under conditions of nutrient depletion. Mitogenic stimulation leads to binding and activation of a complex composed of MTOR and RPTOR, leading to phosphorylation and release of RPS6KB1 and binding of EIF4B to eIF-3. Interacts with RNF139; the interaction leads to protein translation inhibitions in a ubiquitination-dependent manner. Interacts with DTX1, the interaction is required for deubiquitinating activity towards NOTCH1. Phosphorylation is enhanced upon serum stimulation. Phosphorylated during apoptosis by caspase-processed CDK11.

Its subcellular location is the cytoplasm. The catalysed reaction is Thiol-dependent hydrolysis of ester, thioester, amide, peptide and isopeptide bonds formed by the C-terminal Gly of ubiquitin (a 76-residue protein attached to proteins as an intracellular targeting signal).. Its function is as follows. Component of the eukaryotic translation initiation factor 3 (eIF-3) complex, which is required for several steps in the initiation of protein synthesis. The eIF-3 complex associates with the 40S ribosome and facilitates the recruitment of eIF-1, eIF-1A, eIF-2:GTP:methionyl-tRNAi and eIF-5 to form the 43S pre-initiation complex (43S PIC). The eIF-3 complex stimulates mRNA recruitment to the 43S PIC and scanning of the mRNA for AUG recognition. The eIF-3 complex is also required for disassembly and recycling of post-termination ribosomal complexes and subsequently prevents premature joining of the 40S and 60S ribosomal subunits prior to initiation. The eIF-3 complex specifically targets and initiates translation of a subset of mRNAs involved in cell proliferation, including cell cycling, differentiation and apoptosis, and uses different modes of RNA stem-loop binding to exert either translational activation or repression. In terms of biological role, deubiquitinates activated NOTCH1, promoting its nuclear import, thereby acting as a positive regulator of Notch signaling. The polypeptide is Eukaryotic translation initiation factor 3 subunit F (Homo sapiens (Human)).